The primary structure comprises 315 residues: Tyrosine recombinase XerC (315 aa).

The Core-binding (CB) domain maps to 1-103 (MIASFYAFLD…AIKSFAKFCV (103 aa)). The Tyr recombinase domain occupies 124–306 (ELPSPLTYEQ…SMKLKKQIHD (183 aa)). Catalysis depends on residues Arg164, Lys188, His258, Arg261, and His284. Tyr293 serves as the catalytic O-(3'-phospho-DNA)-tyrosine intermediate.

It belongs to the 'phage' integrase family. XerC subfamily. As to quaternary structure, forms a cyclic heterotetrameric complex composed of two molecules of XerC and two molecules of XerD.

Its subcellular location is the cytoplasm. In terms of biological role, site-specific tyrosine recombinase, which acts by catalyzing the cutting and rejoining of the recombining DNA molecules. The XerC-XerD complex is essential to convert dimers of the bacterial chromosome into monomers to permit their segregation at cell division. It also contributes to the segregational stability of plasmids. The chain is Tyrosine recombinase XerC from Chlamydia muridarum (strain MoPn / Nigg).